The sequence spans 117 residues: Large ribosomal subunit protein uL18 (117 aa).

The protein belongs to the universal ribosomal protein uL18 family. In terms of assembly, part of the 50S ribosomal subunit; part of the 5S rRNA/L5/L18/L25 subcomplex. Contacts the 5S and 23S rRNAs.

In terms of biological role, this is one of the proteins that bind and probably mediate the attachment of the 5S RNA into the large ribosomal subunit, where it forms part of the central protuberance. This is Large ribosomal subunit protein uL18 from Haemophilus ducreyi (strain 35000HP / ATCC 700724).